The chain runs to 171 residues: Protein E6 (171 aa).

Residues 1-28 (MATTDSSTDSADEGPSPKSSYCDTTETK) are disordered. Residues 17–28 (PKSSYCDTTETK) are compositionally biased toward polar residues. 2 zinc fingers span residues 58–94 (CNFCGNFLTHLEVCEFDQKKLSLIWKGHCVFACCRVC) and 131–167 (CYTCMRFLDSIEKLDICGRKLPFHKVRGSWKGICRLC).

The protein belongs to the papillomaviridae E6 protein family. As to quaternary structure, forms homodimers. Interacts with ubiquitin-protein ligase UBE3A/E6-AP; this interaction stimulates UBE3A ubiquitin activity. Interacts with host BAK1.

The protein resides in the host cytoplasm. It localises to the host nucleus. Plays a major role in the induction and maintenance of cellular transformation. E6 associates with host UBE3A/E6-AP ubiquitin-protein ligase and modulates its activity. Protects host keratinocytes from apoptosis by mediating the degradation of host BAK1. May also inhibit host immune response. In Human papillomavirus 14, this protein is Protein E6.